A 295-amino-acid chain; its full sequence is GTPase Era (295 aa).

The Era-type G domain occupies 3-170 (KSGFVTIVGR…VDLMKTELPE (168 aa)). The tract at residues 11-18 (GRPNVGKS) is G1. Residue 11–18 (GRPNVGKS) coordinates GTP. The G2 stretch occupies residues 37–41 (QTTRN). Residues 58–61 (DTPG) form a G3 region. Residues 58-62 (DTPGI) and 120-123 (NKID) contribute to the GTP site. Residues 120-123 (NKID) are G4. The interval 149–151 (IAA) is G5. The 78-residue stretch at 201–278 (LRDEVPHGIA…NVKIWVKVRK (78 aa)) folds into the KH type-2 domain.

The protein belongs to the TRAFAC class TrmE-Era-EngA-EngB-Septin-like GTPase superfamily. Era GTPase family. As to quaternary structure, monomer.

It is found in the cytoplasm. The protein resides in the cell membrane. Functionally, an essential GTPase that binds both GDP and GTP, with rapid nucleotide exchange. Plays a role in 16S rRNA processing and 30S ribosomal subunit biogenesis and possibly also in cell cycle regulation and energy metabolism. This Clostridium botulinum (strain Alaska E43 / Type E3) protein is GTPase Era.